The following is a 344-amino-acid chain: MIKVGIIGATGYVGVELLRLLLNHSQIEIGAISSVSFDGQELDSIYKNFLGRTNLICTNMNEVIEKNDVIFTALPPGLSEDIATKIIENNKICIDMGADFRLSNEEEYKYWYGKNFSHPKLHKQSIYGLPELNKEKIRKSSLIANPGCYPTSIELGLIPLLKNLLIKPNGIICDSKSGTTGSGRSLSLNTHFPEENENFTPYKIGEHRHTPEIEEILSNIANTKVTITFTPHLLPINRGIISTIYCTPKEKIDLNSIHKIYTDFYKDKEFVNVLPLGDIASIKNVKLSNNCHISLHLNHRKDQIIIISAIDNMIKGAAGQAIQNMNIILGFKENEGLNLISPAF.

Cys148 is an active-site residue.

It belongs to the NAGSA dehydrogenase family. Type 1 subfamily.

Its subcellular location is the cytoplasm. It catalyses the reaction N-acetyl-L-glutamate 5-semialdehyde + phosphate + NADP(+) = N-acetyl-L-glutamyl 5-phosphate + NADPH + H(+). It functions in the pathway amino-acid biosynthesis; L-arginine biosynthesis; N(2)-acetyl-L-ornithine from L-glutamate: step 3/4. Catalyzes the NADPH-dependent reduction of N-acetyl-5-glutamyl phosphate to yield N-acetyl-L-glutamate 5-semialdehyde. This chain is N-acetyl-gamma-glutamyl-phosphate reductase, found in Clostridium botulinum (strain Alaska E43 / Type E3).